The sequence spans 245 residues: Small ribosomal subunit protein uS3 (245 aa).

Residues 21 to 92 (LNEFLTRELA…SVELYAEKVA (72 aa)) enclose the KH type-2 domain. The segment at 215–245 (EEILPTTPVSEQKGAKPEVPVMPQGAPVPTA) is disordered.

Belongs to the universal ribosomal protein uS3 family.

The protein localises to the cytoplasm. It localises to the nucleus. It is found in the nucleolus. The protein resides in the mitochondrion inner membrane. Its subcellular location is the cytoskeleton. The protein localises to the spindle. It carries out the reaction 2'-deoxyribonucleotide-(2'-deoxyribose 5'-phosphate)-2'-deoxyribonucleotide-DNA = a 3'-end 2'-deoxyribonucleotide-(2,3-dehydro-2,3-deoxyribose 5'-phosphate)-DNA + a 5'-end 5'-phospho-2'-deoxyribonucleoside-DNA + H(+). In terms of biological role, component of the small ribosomal subunit. The ribosome is a large ribonucleoprotein complex responsible for the synthesis of proteins in the cell. Has endonuclease activity and plays a role in repair of damaged DNA. Also involved in other processes including regulation of transcription, translation of its cognate mRNA, spindle formation and chromosome movement during mitosis, and apoptosis. The polypeptide is Small ribosomal subunit protein uS3 (rps3) (Ictalurus punctatus (Channel catfish)).